We begin with the raw amino-acid sequence, 445 residues long: KICSTOR subunit 2 (445 aa).

Belongs to the KICS2 family. In terms of assembly, part of the KICSTOR complex composed of KPTN, ITFG2, KICS2 and SZT2. SZT2 probably serves as a link between the other three proteins in the KICSTOR complex and may mediate the direct interaction with the GATOR complex via GATOR1. The KICSTOR complex interacts directly with the GATOR1 complex and most probably indirectly with the GATOR2 complex in an amino acid-independent manner.

The protein resides in the lysosome membrane. Functionally, as part of the KICSTOR complex functions in the amino acid-sensing branch of the TORC1 signaling pathway. Recruits, in an amino acid-independent manner, the GATOR1 complex to the lysosomal membranes and allows its interaction with GATOR2 and the RAG GTPases. Functions upstream of the RAG GTPases and is required to negatively regulate mTORC1 signaling in absence of amino acids. In absence of the KICSTOR complex mTORC1 is constitutively localized to the lysosome and activated. The KICSTOR complex is also probably involved in the regulation of mTORC1 by glucose. The polypeptide is KICSTOR subunit 2 (Homo sapiens (Human)).